Reading from the N-terminus, the 449-residue chain is Kynurenine 3-monooxygenase (449 aa).

Belongs to the aromatic-ring hydroxylase family. KMO subfamily. Requires FAD as cofactor.

It carries out the reaction L-kynurenine + NADPH + O2 + H(+) = 3-hydroxy-L-kynurenine + NADP(+) + H2O. Its pathway is cofactor biosynthesis; NAD(+) biosynthesis; quinolinate from L-kynurenine: step 1/3. Its function is as follows. Catalyzes the hydroxylation of L-kynurenine (L-Kyn) to form 3-hydroxy-L-kynurenine (L-3OHKyn). Required for synthesis of quinolinic acid. This chain is Kynurenine 3-monooxygenase, found in Legionella pneumophila (strain Corby).